The following is a 446-amino-acid chain: Enolase (446 aa).

Substrate contacts are provided by histidine 164 and glutamate 173. The active-site Proton donor is the glutamate 216. Residues aspartate 251, glutamate 302, and aspartate 329 each contribute to the Mg(2+) site. Substrate is bound by residues glutamate 302 and aspartate 329. Lysine 354 functions as the Proton acceptor in the catalytic mechanism. Substrate-binding positions include 381–384 (SHRS) and lysine 405.

It belongs to the enolase family. Homodimer. Requires Mg(2+) as cofactor.

The protein localises to the cytoplasm. The catalysed reaction is (2R)-2-phosphoglycerate = phosphoenolpyruvate + H2O. Its pathway is carbohydrate degradation; glycolysis; pyruvate from D-glyceraldehyde 3-phosphate: step 4/5. The protein is Enolase (ENO1) of Oryza sativa subsp. japonica (Rice).